The following is a 258-amino-acid chain: Venom plasminogen activator LV-PA (258 aa).

A signal peptide spans 1-18; it reads MVLITVLANLLILQLSYA. The propeptide occupies 19 to 24; that stretch reads QKSSKL. Residues 25–249 enclose the Peptidase S1 domain; it reads VFGGDECNIN…YTDWIQSIIA (225 aa). The N-linked (GlcNAc...) asparagine glycan is linked to Asn-44. Cys-50 and Cys-66 are disulfide-bonded. Catalysis depends on charge relay system residues His-65 and Asp-110. 3 disulfide bridges follow: Cys-142/Cys-210, Cys-174/Cys-189, and Cys-200/Cys-225. Ser-204 acts as the Charge relay system in catalysis.

Belongs to the peptidase S1 family. Snake venom subfamily. As to quaternary structure, monomer. N-glycosylated. PubMed:17034951 shows that it contains approximately 10% carbohydrates, PubMed:10871053 shows that it contains approximately 20% carbohydrates. As to expression, expressed by the venom gland.

It is found in the secreted. Its activity is regulated as follows. Inhibited by the serine protease inhibitors NPGB, PMSF, p-aminobenzamidine and aprotinin. Not inhibited by soybean trypsin inhibitor or EDTA. In terms of biological role, snake venom serine protease that activates plasminogen. Weakly hydrolyzes the alpha chain of human fibrinogen without releasing fibrinopeptide A. Does not hydrolyze plasma kallikrein or factor Xa. Does not clot fibrinogen. Does not affect platelet function. Induces hypotensive effects on rats. Shows a preferential cleavage at Lys-|-Xaa over Arg-|-Xaa bonds. This is Venom plasminogen activator LV-PA from Lachesis muta muta (Bushmaster).